We begin with the raw amino-acid sequence, 141 residues long: ATP synthase epsilon chain (141 aa).

The protein belongs to the ATPase epsilon chain family. F-type ATPases have 2 components, CF(1) - the catalytic core - and CF(0) - the membrane proton channel. CF(1) has five subunits: alpha(3), beta(3), gamma(1), delta(1), epsilon(1). CF(0) has three main subunits: a, b and c.

The protein localises to the cell membrane. Its function is as follows. Produces ATP from ADP in the presence of a proton gradient across the membrane. This Lactococcus lactis subsp. lactis (strain IL1403) (Streptococcus lactis) protein is ATP synthase epsilon chain.